A 190-amino-acid polypeptide reads, in one-letter code: Probable calcium-binding protein CML27 (190 aa).

3 consecutive EF-hand domains span residues 27 to 62 (LNAL…LGLG), 115 to 150 (DDEG…LGLP), and 153 to 188 (RNLA…ITVW). Positions 40, 42, 44, 46, 51, 128, 130, 132, 139, 166, 168, 170, 172, and 177 each coordinate Ca(2+).

Functionally, potential calcium sensor. The protein is Probable calcium-binding protein CML27 (CML27) of Oryza sativa subsp. japonica (Rice).